Consider the following 418-residue polypeptide: Serpin A3-8 (418 aa).

A signal peptide spans 1 to 25; the sequence is MRAERMSPLLALGLLVSGLCSRVHC. N-linked (GlcNAc...) asparagine glycosylation is found at asparagine 103, asparagine 183, asparagine 233, and asparagine 268.

Belongs to the serpin family. Homodimer.

Its subcellular location is the cytoplasmic vesicle. It is found in the secretory vesicle. The protein localises to the chromaffin granule. It localises to the secreted. Serine protease inhibitor. The polypeptide is Serpin A3-8 (Bos taurus (Bovine)).